A 376-amino-acid polypeptide reads, in one-letter code: Pyrimidine monooxygenase RutA (376 aa).

Residues 61–62 (IK), Asn-127, Glu-136, 152–153 (RY), and Ser-202 each bind FMN.

This sequence belongs to the NtaA/SnaA/DszA monooxygenase family. RutA subfamily.

The enzyme catalyses uracil + FMNH2 + NADH + O2 = (Z)-3-ureidoacrylate + FMN + NAD(+) + H2O + H(+). The catalysed reaction is thymine + FMNH2 + NADH + O2 = (Z)-2-methylureidoacrylate + FMN + NAD(+) + H2O + H(+). Catalyzes the pyrimidine ring opening between N-3 and C-4 by an unusual flavin hydroperoxide-catalyzed mechanism, adding oxygen atoms in the process to yield ureidoacrylate peracid, that immediately reacts with FMN forming ureidoacrylate and FMN-N(5)-oxide. The FMN-N(5)-oxide reacts spontaneously with NADH to produce FMN. Requires the flavin reductase RutF to regenerate FMN in vivo. The protein is Pyrimidine monooxygenase RutA of Methylorubrum extorquens (strain CM4 / NCIMB 13688) (Methylobacterium extorquens).